The chain runs to 159 residues: 4-deoxy-4-sulfo-D-erythrose isomerase (159 aa).

Residue C66 is the Proton acceptor of the active site.

The protein belongs to the LacAB/RpiB family.

It catalyses the reaction 4-deoxy-4-sulfo-D-erythrose = 4-deoxy-4-sulfo-D-erythrulose. Its function is as follows. Part of the sulfo-TK pathway, a D-sulfoquinovose degradation pathway that produces 2-hydroxyethane-1-sulfonate (isethionate). Catalyzes the isomerization of 4-deoxy-4-sulfo-D-erythrose (SE) to 4-deoxy-4-sulfo-D-erythrulose (SEu). The sequence is that of 4-deoxy-4-sulfo-D-erythrose isomerase from Clostridium sp. (strain MSTE9).